A 224-amino-acid polypeptide reads, in one-letter code: Glycerol-3-phosphate acyltransferase (224 aa).

Transmembrane regions (helical) follow at residues Ile-14–Leu-34, Tyr-70–Ala-90, Thr-99–Phe-119, Ile-129–Ile-149, Leu-162–Pro-182, and Ile-185–Phe-205.

The protein belongs to the PlsY family. In terms of assembly, probably interacts with PlsX.

Its subcellular location is the cell inner membrane. It carries out the reaction an acyl phosphate + sn-glycerol 3-phosphate = a 1-acyl-sn-glycero-3-phosphate + phosphate. It participates in lipid metabolism; phospholipid metabolism. Functionally, catalyzes the transfer of an acyl group from acyl-phosphate (acyl-PO(4)) to glycerol-3-phosphate (G3P) to form lysophosphatidic acid (LPA). This enzyme utilizes acyl-phosphate as fatty acyl donor, but not acyl-CoA or acyl-ACP. In Helicobacter hepaticus (strain ATCC 51449 / 3B1), this protein is Glycerol-3-phosphate acyltransferase.